Here is a 686-residue protein sequence, read N- to C-terminus: Elongation factor G 2 (686 aa).

A tr-type G domain is found at 7 to 280 (TTVRNLGILA…AVVAYLPSPL (274 aa)). GTP-binding positions include 16-23 (AHVDAGKT), 80-84 (DTPGH), and 134-137 (NKMD).

The protein belongs to the TRAFAC class translation factor GTPase superfamily. Classic translation factor GTPase family. EF-G/EF-2 subfamily.

It is found in the cytoplasm. Its function is as follows. Catalyzes the GTP-dependent ribosomal translocation step during translation elongation. During this step, the ribosome changes from the pre-translocational (PRE) to the post-translocational (POST) state as the newly formed A-site-bound peptidyl-tRNA and P-site-bound deacylated tRNA move to the P and E sites, respectively. Catalyzes the coordinated movement of the two tRNA molecules, the mRNA and conformational changes in the ribosome. The protein is Elongation factor G 2 (fusB) of Streptomyces coelicolor (strain ATCC BAA-471 / A3(2) / M145).